Consider the following 116-residue polypeptide: MVNHFRIDRVGMEIKREVNEILQKKVRDPRVQGVTITDVQMLGDLSVAKVYYTILSNLASDNQKAQIGLEKATGTIKRELGRNLKLYKIPDLTFVKDESIEYGNKIDEMLRNLDKN.

Belongs to the RbfA family. Monomer. Binds 30S ribosomal subunits, but not 50S ribosomal subunits or 70S ribosomes.

It localises to the cytoplasm. In terms of biological role, one of several proteins that assist in the late maturation steps of the functional core of the 30S ribosomal subunit. Associates with free 30S ribosomal subunits (but not with 30S subunits that are part of 70S ribosomes or polysomes). Required for efficient processing of 16S rRNA. May interact with the 5'-terminal helix region of 16S rRNA. The protein is Ribosome-binding factor A of Streptococcus pneumoniae (strain ATCC BAA-255 / R6).